The sequence spans 135 residues: Transcription antitermination protein NusB (135 aa).

It belongs to the NusB family.

In terms of biological role, involved in transcription antitermination. Required for transcription of ribosomal RNA (rRNA) genes. Binds specifically to the boxA antiterminator sequence of the ribosomal RNA (rrn) operons. In Clostridium acetobutylicum (strain ATCC 824 / DSM 792 / JCM 1419 / IAM 19013 / LMG 5710 / NBRC 13948 / NRRL B-527 / VKM B-1787 / 2291 / W), this protein is Transcription antitermination protein NusB.